The sequence spans 321 residues: Phosphoenolpyruvate transferase (321 aa).

Asp-51 contributes to the 7,8-didemethyl-8-hydroxy-5-deazariboflavin binding site.

It belongs to the CofD family. In terms of assembly, homodimer. Requires Mg(2+) as cofactor.

The enzyme catalyses enolpyruvoyl-2-diphospho-5'-guanosine + 7,8-didemethyl-8-hydroxy-5-deazariboflavin = dehydro coenzyme F420-0 + GMP + H(+). It functions in the pathway cofactor biosynthesis; coenzyme F420 biosynthesis. Catalyzes the transfer of the phosphoenolpyruvate moiety from enoylpyruvoyl-2-diphospho-5'-guanosine (EPPG) to 7,8-didemethyl-8-hydroxy-5-deazariboflavin (FO) with the formation of dehydro coenzyme F420-0 and GMP. This chain is Phosphoenolpyruvate transferase, found in Kitasatospora aureofaciens (Streptomyces aureofaciens).